The sequence spans 461 residues: MDFTTFHNIIGGKPRGSDNSHSGVDPLTRTTLWPVPTASPQDVDDAVEAAQRALPAWSQASYDERTGLLEKFADLYLSRAGDFCQLLASECGRTVENAAIEVYWAAQWLRYPSSYKLPEEQIEDDTKTAIVTYEPLGVVAAICPWNSIGKIAPALATGNCVILKPSPFTPYTSLKLVELAQEVFPPSVIQVLSGGNGLGPALVKHPGIQKISFTGSTATGKQILKDGADTMKRITLETAGNNPAIILPDIDVTATVPHISGGLWFNAGQVCIAPRRLYIHADIFDVFVDALVETTKEATKEMTKIGPVQNELQFRKLVKTLDDAKSAGHDMATGGPLADAETGGFFLRPTIIKDASPESSIVSGEHFGPIVTCVRFSDADEAVHLANAGESGLAASIWTTNLTAAKALASRLDVGSVYINGPPQPDPRVPFGGHKQSGLGVEYGLQGLLSFCQTKAVYLYK.

An NAD(+)-binding site is contributed by 215–220; the sequence is GSTATG. Residues E237 and C271 contribute to the active site.

It belongs to the aldehyde dehydrogenase family.

It catalyses the reaction an aldehyde + NAD(+) + H2O = a carboxylate + NADH + 2 H(+). Its pathway is mycotoxin biosynthesis. Functionally, aldehyde dehydrogenase; part of the gene cluster that mediates the biosynthesis of the mycotoxin lucilactaene and the lucilactaene-related compound NG-391 that act as cell cycle inhibitors with potent growth inhibitory activity against malarial parasites, moderate growth inhibitory activity against cancer cells, and no activity against bacteria and fungi. LUC3 is important for lucilactaene biosynthesis and performs the oxidation of the C-20 alcoholic analog prelucilactaene G into a carboxylic derivative that has still to be identified. The pathway begins with the hybrid PKS-NRPS synthetase LUC5 which is responsible for the condensation of one acetyl-coenzyme A (CoA) unit with six malonyl-CoA units and the amide linkage of the arising heptaketide and homoserine, subsequently releasing the first intermediate prelucilactaene B. Both the cytochrome P450 monooxygenase LUC2 and the hydrolase LUC6 function in parallel in modification of prelucilactaene B. LUC6 may catalyze the 2-pyrrolidone ring formation to form prelucilactaene C from prelucilactaene B, followed by C-15 hydroxylation by the same enzyme to give prelucilactaene D, which is then converted to prelucilactaene E by epoxidation, and finally to prelucilactaene F by cyclization. Prelucilactane D, prelucilactaene E, and prelucilactaene F can be converted to dihydrolucilactaene, NG391, and lucilactaene, respectively, via C-20 methyl group hydroxylation by the cytochrome P450 monooxygenase LUC2. However, LUC2, unlike FUS8 in fusarin C biosynthesis, is not enough for the full oxidation of the C-20 methyl group into carboxylic acid, which is a prerequisite for the final methylation step. The aldehyde dehydrogenase LUC3 is involved in the biosynthesis by further oxidation of the C-20 alcoholic analog prelucilactaene G into a carboxylic derivative. This unidentified carboxylic derivative may be converted to demethyllucilactaene. As the last step, the methyltransferase LUC1 methylates the hydroxyl group at C-21 of demethyllucilactaene to generate lucilactaene. The polypeptide is Aldehyde dehydrogenase LUC3 (Fusarium sp).